The sequence spans 148 residues: MKAPLLLGLLLLSVTVQGKVFERCDLARTLKRLGLAGFKGVSLANWMCLAKWESDYNTKATNYNPGSRSTDYGIFQINSRYWCNDGKTPRAVNSCHIPCSDLLKDDITQAVACAKRVVSDPNGIRAWVAWRAHCENQDVSQYVRNCGV.

A signal peptide spans 1 to 18 (MKAPLLLGLLLLSVTVQG). Residues 19-148 (KVFERCDLAR…VSQYVRNCGV (130 aa)) enclose the C-type lysozyme domain. 4 disulfide bridges follow: Cys24-Cys146, Cys48-Cys134, Cys83-Cys99, and Cys95-Cys113. Residues Glu53 and Asp71 contribute to the active site.

It belongs to the glycosyl hydrolase 22 family. Monomer.

The protein localises to the secreted. It carries out the reaction Hydrolysis of (1-&gt;4)-beta-linkages between N-acetylmuramic acid and N-acetyl-D-glucosamine residues in a peptidoglycan and between N-acetyl-D-glucosamine residues in chitodextrins.. Its function is as follows. Lysozymes have primarily a bacteriolytic function; those in tissues and body fluids are associated with the monocyte-macrophage system and enhance the activity of immunoagents. This Leptonychotes weddellii (Weddell seal) protein is Lysozyme C (LYZ).